Consider the following 340-residue polypeptide: Coproporphyrin III ferrochelatase (340 aa).

Residues Ser-52 and Tyr-116 each contribute to the Fe-coproporphyrin III site. Positions 172 and 255 each coordinate Fe(2+).

It belongs to the ferrochelatase family.

It localises to the cytoplasm. It catalyses the reaction Fe-coproporphyrin III + 2 H(+) = coproporphyrin III + Fe(2+). The protein operates within porphyrin-containing compound metabolism; protoheme biosynthesis. In terms of biological role, involved in coproporphyrin-dependent heme b biosynthesis. Catalyzes the insertion of ferrous iron into coproporphyrin III to form Fe-coproporphyrin III. This Mycobacterium ulcerans (strain Agy99) protein is Coproporphyrin III ferrochelatase.